Consider the following 213-residue polypeptide: MGTWILFACLLGAAFSMPLPPHPGHPGYINFSYEVLTPLKWYQSMIRHPYPSYGYEPMGGWLHHQIIPVVSQQTPQNHALQPHHHIPMVPAQQPVVPQQPMMPVPGQHSMTPTQHHQPNLPLPAQQPFQPQSIQPQPHQPLQPHQPLQPMQPMQPLQPLQPLQPQPPVHPIQPLPPQPPLPPIFPMQPLPPMLPDLPLEAWPATDKTKREEVD.

A signal peptide spans 1-16 (MGTWILFACLLGAAFS). A Phosphoserine modification is found at S32. Composition is skewed to low complexity over residues 96–105 (VPQQPMMPVP) and 114–160 (QHHQ…QPLQ). The segment at 96 to 213 (VPQQPMMPVP…TDKTKREEVD (118 aa)) is disordered. Residues 161–194 (PLQPQPPVHPIQPLPPQPPLPPIFPMQPLPPMLP) show a composition bias toward pro residues.

Belongs to the amelogenin family. Interacts with KRT5. In terms of processing, phosphorylated by FAM20C in vitro.

The protein resides in the secreted. It is found in the extracellular space. It localises to the extracellular matrix. In terms of biological role, plays a role in the biomineralization of teeth. Seems to regulate the formation of crystallites during the secretory stage of tooth enamel development. Thought to play a major role in the structural organization and mineralization of developing enamel. The protein is Amelogenin, X isoform (AMELX) of Bos taurus (Bovine).